The primary structure comprises 799 residues: Cadherin-8 (799 aa).

The N-terminal stretch at 1–29 (MPERLAETLLDLWTPLIILWITLPSFVYM) is a signal peptide. A propeptide spanning residues 30–61 (APMNQAHVLTTGSPLELSRQSEEMRILNRSKR) is cleaved from the precursor. 5 consecutive Cadherin domains span residues 62-167 (GWVW…APEF), 168-276 (LNGP…PPKF), 277-391 (AQSL…PPVF), 392-494 (SSPT…DNAP), and 495-616 (EFAS…YVLP). Residues 62–621 (GWVWNQMFVL…PYVLPIGLSM (560 aa)) are Extracellular-facing. Asn188 is a glycosylation site (N-linked (GlcNAc...) asparagine). Asn463, Asn473, and Asn544 each carry an N-linked (GlcNAc...) asparagine glycan. The helical transmembrane segment at 622-642 (GALIAILACIILLLVIVVLFV) threads the bilayer. Residues 643–799 (TLRRHKNEPL…YSVGESDKET (157 aa)) are Cytoplasmic-facing. Ser795 is modified (phosphoserine).

It localises to the cell membrane. In terms of biological role, cadherins are calcium-dependent cell adhesion proteins. They preferentially interact with themselves in a homophilic manner in connecting cells; cadherins may thus contribute to the sorting of heterogeneous cell types. In Rattus norvegicus (Rat), this protein is Cadherin-8 (Cdh8).